A 197-amino-acid chain; its full sequence is Pyridoxal 5'-phosphate synthase subunit PdxT (197 aa).

52–54 (GES) provides a ligand contact to L-glutamine. Residue Cys-84 is the Nucleophile of the active site. Residues Arg-116 and 143–144 (IR) contribute to the L-glutamine site. Residues His-179 and Glu-181 each act as charge relay system in the active site.

The protein belongs to the glutaminase PdxT/SNO family. As to quaternary structure, in the presence of PdxS, forms a dodecamer of heterodimers. Only shows activity in the heterodimer.

It catalyses the reaction aldehydo-D-ribose 5-phosphate + D-glyceraldehyde 3-phosphate + L-glutamine = pyridoxal 5'-phosphate + L-glutamate + phosphate + 3 H2O + H(+). It carries out the reaction L-glutamine + H2O = L-glutamate + NH4(+). Its pathway is cofactor biosynthesis; pyridoxal 5'-phosphate biosynthesis. Its function is as follows. Catalyzes the hydrolysis of glutamine to glutamate and ammonia as part of the biosynthesis of pyridoxal 5'-phosphate. The resulting ammonia molecule is channeled to the active site of PdxS. In Ignicoccus hospitalis (strain KIN4/I / DSM 18386 / JCM 14125), this protein is Pyridoxal 5'-phosphate synthase subunit PdxT.